The following is a 155-amino-acid chain: SsrA-binding protein (155 aa).

Belongs to the SmpB family.

The protein localises to the cytoplasm. Its function is as follows. Required for rescue of stalled ribosomes mediated by trans-translation. Binds to transfer-messenger RNA (tmRNA), required for stable association of tmRNA with ribosomes. tmRNA and SmpB together mimic tRNA shape, replacing the anticodon stem-loop with SmpB. tmRNA is encoded by the ssrA gene; the 2 termini fold to resemble tRNA(Ala) and it encodes a 'tag peptide', a short internal open reading frame. During trans-translation Ala-aminoacylated tmRNA acts like a tRNA, entering the A-site of stalled ribosomes, displacing the stalled mRNA. The ribosome then switches to translate the ORF on the tmRNA; the nascent peptide is terminated with the 'tag peptide' encoded by the tmRNA and targeted for degradation. The ribosome is freed to recommence translation, which seems to be the essential function of trans-translation. In Moorella thermoacetica (strain ATCC 39073 / JCM 9320), this protein is SsrA-binding protein.